A 281-amino-acid polypeptide reads, in one-letter code: MAGVTAIEIPQWIQDNQGDFVPPVCNKCMFSDQLKVFYVGGPNQRKDFHLEEGEEFFFQRKGDMVLKVIEKGQVRDLVIKQGEMFMLPARVEHSPQRFANSIGLVVERERKNTEFDCVRFLVGSSNVTLFERWFFLTDVVKDLPPLIKEFYNSNEFKTGKPGKGTFACNAPYEARWTDLPVPINRKEFIYDHISEVKNGPVKIYGAPEYKTEVMLLGEGSYDLEAGAVELIIWLQENTFAVVEESGFTYALKSETMVRIKPNTKCLLNVKGGFAITIRMPG.

The segment at Met1–Gly162 is domain A (catalytic). Residue Arg45 coordinates O2. His49, Glu55, and His93 together coordinate Fe cation. A substrate-binding site is contributed by Glu55. Residues Arg97 and Glu107 each coordinate substrate. Residues Lys163–Leu179 form a linker region. The interval Pro180–Gly281 is domain B.

Belongs to the 3-HAO family. Requires Fe(2+) as cofactor.

Its subcellular location is the cytoplasm. It carries out the reaction 3-hydroxyanthranilate + O2 = (2Z,4Z)-2-amino-3-carboxymuconate 6-semialdehyde. Its pathway is cofactor biosynthesis; NAD(+) biosynthesis; quinolinate from L-kynurenine: step 3/3. Functionally, catalyzes the oxidative ring opening of 3-hydroxyanthranilate to 2-amino-3-carboxymuconate semialdehyde, which spontaneously cyclizes to quinolinate. In Caenorhabditis briggsae, this protein is 3-hydroxyanthranilate 3,4-dioxygenase (haao-1).